Consider the following 224-residue polypeptide: UPF0758 protein PLES_57141 (224 aa).

Residues 102 to 224 (ILESPQAVRD…PLSLAEYGWL (123 aa)) form the MPN domain. His173, His175, and Asp186 together coordinate Zn(2+). Residues 173 to 186 (HNHPSGDARPSLAD) carry the JAMM motif motif.

Belongs to the UPF0758 family.

The sequence is that of UPF0758 protein PLES_57141 from Pseudomonas aeruginosa (strain LESB58).